Here is a 217-residue protein sequence, read N- to C-terminus: Large ribosomal subunit protein bL25 (217 aa).

Positions Ser187–Glu217 are disordered. Residues Glu193–Glu207 show a composition bias toward acidic residues. Positions Val208 to Glu217 are enriched in basic and acidic residues.

This sequence belongs to the bacterial ribosomal protein bL25 family. CTC subfamily. As to quaternary structure, part of the 50S ribosomal subunit; part of the 5S rRNA/L5/L18/L25 subcomplex. Contacts the 5S rRNA. Binds to the 5S rRNA independently of L5 and L18.

Its function is as follows. This is one of the proteins that binds to the 5S RNA in the ribosome where it forms part of the central protuberance. The sequence is that of Large ribosomal subunit protein bL25 from Thermosipho africanus (strain TCF52B).